The primary structure comprises 160 residues: MTEQRFTHLDDSGRAQMVDVTDKDITQRAATAQARVRMQPSTLQMILAGEHPKGDVLATARIAGIQAAKKTWDLIPLCHPLLLTGITVTIEPEADDALCVQATCKLKGTTGVEMEALTAASVACLTLYDMCKAVDRCMVIESVCLLEKSGGRSGTFRRER.

Residues 77-79 and 114-115 contribute to the substrate site; these read LCH and ME. The active site involves Asp129.

Belongs to the MoaC family. In terms of assembly, homohexamer; trimer of dimers.

It carries out the reaction (8S)-3',8-cyclo-7,8-dihydroguanosine 5'-triphosphate = cyclic pyranopterin phosphate + diphosphate. Its pathway is cofactor biosynthesis; molybdopterin biosynthesis. Functionally, catalyzes the conversion of (8S)-3',8-cyclo-7,8-dihydroguanosine 5'-triphosphate to cyclic pyranopterin monophosphate (cPMP). The protein is Cyclic pyranopterin monophosphate synthase of Alcanivorax borkumensis (strain ATCC 700651 / DSM 11573 / NCIMB 13689 / SK2).